Consider the following 248-residue polypeptide: 4-hydroxy-tetrahydrodipicolinate reductase (248 aa).

Residues 9–14, 77–79, and 104–107 each bind NAD(+); these read GAKGRV, GTT, and APNF. Residue His-134 is the Proton donor/acceptor of the active site. His-135 contacts (S)-2,3,4,5-tetrahydrodipicolinate. The active-site Proton donor is the Lys-138. 144-145 contacts (S)-2,3,4,5-tetrahydrodipicolinate; sequence GT.

This sequence belongs to the DapB family.

It is found in the cytoplasm. The catalysed reaction is (S)-2,3,4,5-tetrahydrodipicolinate + NAD(+) + H2O = (2S,4S)-4-hydroxy-2,3,4,5-tetrahydrodipicolinate + NADH + H(+). It catalyses the reaction (S)-2,3,4,5-tetrahydrodipicolinate + NADP(+) + H2O = (2S,4S)-4-hydroxy-2,3,4,5-tetrahydrodipicolinate + NADPH + H(+). The protein operates within amino-acid biosynthesis; L-lysine biosynthesis via DAP pathway; (S)-tetrahydrodipicolinate from L-aspartate: step 4/4. Its function is as follows. Catalyzes the conversion of 4-hydroxy-tetrahydrodipicolinate (HTPA) to tetrahydrodipicolinate. This chain is 4-hydroxy-tetrahydrodipicolinate reductase, found in Corynebacterium aurimucosum (strain ATCC 700975 / DSM 44827 / CIP 107346 / CN-1) (Corynebacterium nigricans).